Here is a 332-residue protein sequence, read N- to C-terminus: Anthranilate phosphoribosyltransferase (332 aa).

5-phospho-alpha-D-ribose 1-diphosphate is bound by residues G80, 83 to 84 (GD), T88, 90 to 93 (NLST), 108 to 116 (KHGNRSASG), and S120. Anthranilate is bound at residue G80. A Mg(2+)-binding site is contributed by S92. N111 lines the anthranilate pocket. R166 provides a ligand contact to anthranilate. Mg(2+) is bound by residues D224 and E225.

Belongs to the anthranilate phosphoribosyltransferase family. In terms of assembly, homodimer. Mg(2+) is required as a cofactor.

The catalysed reaction is N-(5-phospho-beta-D-ribosyl)anthranilate + diphosphate = 5-phospho-alpha-D-ribose 1-diphosphate + anthranilate. The protein operates within amino-acid biosynthesis; L-tryptophan biosynthesis; L-tryptophan from chorismate: step 2/5. In terms of biological role, catalyzes the transfer of the phosphoribosyl group of 5-phosphorylribose-1-pyrophosphate (PRPP) to anthranilate to yield N-(5'-phosphoribosyl)-anthranilate (PRA). The polypeptide is Anthranilate phosphoribosyltransferase (Pyrobaculum calidifontis (strain DSM 21063 / JCM 11548 / VA1)).